The primary structure comprises 48 residues: Light-harvesting protein B-870 beta chain (48 aa).

Over 2–21 (AERKGSISGLTDDEAQEFHK) the chain is Cytoplasmic. 2 residues coordinate a bacteriochlorophyll: His20 and His38. A helical transmembrane segment spans residues 22–44 (FWVQGFVGFTAVAVVAHFLVWVW). Residues 45–48 (RPWL) are Periplasmic-facing.

An alpha/beta heterodimer. The core complex is formed by different alpha and beta chains, binding bacteriochlorophyll molecules, and arranged most probably in tetrameric structures disposed around the reaction center. The non-pigmented gamma chains may constitute additional components.

It is found in the cell inner membrane. In terms of biological role, antenna complexes are light-harvesting systems, which transfer the excitation energy to the reaction centers. This chain is Light-harvesting protein B-870 beta chain (pufB), found in Rubrivivax gelatinosus (Rhodocyclus gelatinosus).